The sequence spans 198 residues: Synaptobrevin homolog YKT6-A (198 aa).

Residues 8-127 (VLYKGENKVH…IQYNALDSYL (120 aa)) enclose the Longin domain. The region spanning 138–198 (PMSKVQAELD…RKQNSCCDIM (61 aa)) is the v-SNARE coiled-coil homology domain. Cys194 carries the S-palmitoyl cysteine lipid modification. Cys195 is subject to Cysteine methyl ester. Cys195 is lipidated: S-farnesyl cysteine. Residues 196–198 (DIM) constitute a propeptide, removed in mature form.

The protein belongs to the synaptobrevin family. In terms of processing, palmitoylated; catalyzes its own palmitoylation. Palmitoylation is required for Golgi targeting. Post-translationally, farnesylation is required for Golgi targeting.

Its subcellular location is the cytoplasm. The protein resides in the cytosol. The protein localises to the cytoplasmic vesicle membrane. It is found in the golgi apparatus membrane. Its function is as follows. Vesicular soluble NSF attachment protein receptor (v-SNARE) mediating vesicle docking and fusion to a specific acceptor cellular compartment. Functions in endoplasmic reticulum to Golgi transport; as part of a SNARE complex composed of GOSR1, GOSR2 and STX5. Functions in early/recycling endosome to TGN transport; as part of a SNARE complex composed of BET1L, GOSR1 and STX5. Has a S-palmitoyl transferase activity. The chain is Synaptobrevin homolog YKT6-A (ykt6-a) from Xenopus laevis (African clawed frog).